We begin with the raw amino-acid sequence, 122 residues long: UPF0102 protein BQ09720 (122 aa).

The protein belongs to the UPF0102 family.

In Bartonella quintana (strain Toulouse) (Rochalimaea quintana), this protein is UPF0102 protein BQ09720.